We begin with the raw amino-acid sequence, 303 residues long: MAAAKFTALLIAGPTASGKSALALRLAEKLGGILINADSMQVYRDLRILSARPSAEEELRAPHRLFGAIDGAVNFSVGLWLEAARNILEEARQAGALPIFVGGTGLYFKALTQGLSDIPAVPDDIRAKLRARTEGVAATELHAELSARDPLMAARLRPSDPQRLLRALEVLEATGRSLASFQSRRGPPVLDPAATRAIFLSPERAALNLRIDERFEAMLASGAWAEVEALRRRGLDPALPLMRAHGVPHLIAHLEGKIPQDEAIRLGKRDTRAYARRQFTFARHQLPGFVWAEPREAEALALA.

13–20 (GPTASGKS) is a binding site for ATP. Substrate is bound at residue 15-20 (TASGKS). Interaction with substrate tRNA regions lie at residues 38–41 (DSMQ) and 162–166 (QRLLR).

It belongs to the IPP transferase family. In terms of assembly, monomer. Requires Mg(2+) as cofactor.

It catalyses the reaction adenosine(37) in tRNA + dimethylallyl diphosphate = N(6)-dimethylallyladenosine(37) in tRNA + diphosphate. Functionally, catalyzes the transfer of a dimethylallyl group onto the adenine at position 37 in tRNAs that read codons beginning with uridine, leading to the formation of N6-(dimethylallyl)adenosine (i(6)A). This Methylocella silvestris (strain DSM 15510 / CIP 108128 / LMG 27833 / NCIMB 13906 / BL2) protein is tRNA dimethylallyltransferase.